The sequence spans 212 residues: Phosphatidylserine decarboxylase proenzyme (212 aa).

Ser-182 serves as the catalytic Schiff-base intermediate with substrate; via pyruvic acid. Ser-182 bears the Pyruvic acid (Ser); by autocatalysis mark.

It belongs to the phosphatidylserine decarboxylase family. PSD-A subfamily. Heterodimer of a large membrane-associated beta subunit and a small pyruvoyl-containing alpha subunit. Pyruvate is required as a cofactor. Is synthesized initially as an inactive proenzyme. Formation of the active enzyme involves a self-maturation process in which the active site pyruvoyl group is generated from an internal serine residue via an autocatalytic post-translational modification. Two non-identical subunits are generated from the proenzyme in this reaction, and the pyruvate is formed at the N-terminus of the alpha chain, which is derived from the carboxyl end of the proenzyme. The post-translation cleavage follows an unusual pathway, termed non-hydrolytic serinolysis, in which the side chain hydroxyl group of the serine supplies its oxygen atom to form the C-terminus of the beta chain, while the remainder of the serine residue undergoes an oxidative deamination to produce ammonia and the pyruvoyl prosthetic group on the alpha chain.

It localises to the cell membrane. It carries out the reaction a 1,2-diacyl-sn-glycero-3-phospho-L-serine + H(+) = a 1,2-diacyl-sn-glycero-3-phosphoethanolamine + CO2. Its pathway is phospholipid metabolism; phosphatidylethanolamine biosynthesis; phosphatidylethanolamine from CDP-diacylglycerol: step 2/2. In terms of biological role, catalyzes the formation of phosphatidylethanolamine (PtdEtn) from phosphatidylserine (PtdSer). This chain is Phosphatidylserine decarboxylase proenzyme, found in Paraburkholderia phytofirmans (strain DSM 17436 / LMG 22146 / PsJN) (Burkholderia phytofirmans).